Consider the following 167-residue polypeptide: Ureidoglycolate lyase (167 aa).

Belongs to the ureidoglycolate lyase family. Homodimer. The cofactor is Ni(2+).

The enzyme catalyses (S)-ureidoglycolate = urea + glyoxylate. It participates in nitrogen metabolism; (S)-allantoin degradation. Catalyzes the catabolism of the allantoin degradation intermediate (S)-ureidoglycolate, generating urea and glyoxylate. Involved in the utilization of allantoin as nitrogen source. This Pseudomonas fluorescens (strain SBW25) protein is Ureidoglycolate lyase.